A 397-amino-acid polypeptide reads, in one-letter code: Phosphoglycerate kinase (397 aa).

Substrate-binding positions include 21–23 (DVN), arginine 36, 59–62 (HFGR), arginine 119, and arginine 152. Residues lysine 202, glutamate 324, and 354–357 (GGDT) contribute to the ATP site.

The protein belongs to the phosphoglycerate kinase family. Monomer.

The protein resides in the cytoplasm. The enzyme catalyses (2R)-3-phosphoglycerate + ATP = (2R)-3-phospho-glyceroyl phosphate + ADP. It functions in the pathway carbohydrate degradation; glycolysis; pyruvate from D-glyceraldehyde 3-phosphate: step 2/5. The protein is Phosphoglycerate kinase of Cereibacter sphaeroides (strain KD131 / KCTC 12085) (Rhodobacter sphaeroides).